The following is a 462-amino-acid chain: Argininosuccinate lyase (462 aa).

The protein belongs to the lyase 1 family. Argininosuccinate lyase subfamily.

The protein resides in the cytoplasm. It carries out the reaction 2-(N(omega)-L-arginino)succinate = fumarate + L-arginine. Its pathway is amino-acid biosynthesis; L-arginine biosynthesis; L-arginine from L-ornithine and carbamoyl phosphate: step 3/3. This is Argininosuccinate lyase from Bacillus anthracis (strain A0248).